Here is a 965-residue protein sequence, read N- to C-terminus: Chondroitin synthase (965 aa).

A galactosaminyltransferase; A1 domain region spans residues 132–418; that stretch reads FTWYKNRKKS…IVKEKVPYIY (287 aa). UDP-N-acetyl-alpha-D-galactosamine is bound by residues P158, R162, D189, Y218, R224, and 240-241; that span reads DC. D242 serves as a coordination point for Mn(2+). Residue 362–363 coordinates UDP-N-acetyl-alpha-D-galactosamine; it reads ED. H387 provides a ligand contact to Mn(2+). Positions 419 to 683 are glucuronosyltransferase; A2 domain; sequence RKLLPIEDSH…ESRKYIFNKT (265 aa). Residues Y442, D470, and 518-521 each bind UDP-alpha-D-glucuronate; that span reads QLDS. D522 is a binding site for Mn(2+). UDP-alpha-D-glucuronate contacts are provided by residues H582 and 604–605; that span reads AV. H632 is a binding site for Mn(2+).

Belongs to the glycosyltransferase 2 family. CS/HAS subfamily. It depends on Mn(2+) as a cofactor.

It localises to the cell membrane. The enzyme catalyses 3-O-(beta-D-GlcA-(1-&gt;3)-beta-D-GalNAc-(1-&gt;4)-beta-D-GlcA-(1-&gt;3)-beta-D-Gal-(1-&gt;3)-beta-D-Gal-(1-&gt;4)-beta-D-Xyl)-L-seryl-[protein] + UDP-N-acetyl-alpha-D-galactosamine = 3-O-(beta-D-GalNAc-(1-&gt;4)-beta-D-GlcA-(1-&gt;3)-beta-D-GalNAc-(1-&gt;4)-beta-D-GlcA-(1-&gt;3)-beta-D-Gal-(1-&gt;3)-beta-D-Gal-(1-&gt;4)-beta-D-Xyl)-L-seryl-[protein] + UDP + H(+). The catalysed reaction is 3-O-{beta-D-GlcA-(1-&gt;3)-[beta-D-GalNAc-(1-&gt;4)-beta-D-GlcA-(1-&gt;3)](n)-beta-D-GalNAc-(1-&gt;4)-beta-D-GlcA-(1-&gt;3)-beta-D-Gal-(1-&gt;3)-beta-D-Gal-(1-&gt;4)-beta-D-Xyl}-L-seryl-[protein] + UDP-N-acetyl-alpha-D-galactosamine = 3-O-{[beta-D-GalNAc-(1-&gt;4)-beta-D-GlcA-(1-&gt;3)](n+1)-beta-D-GalNAc-(1-&gt;4)-beta-D-GlcA-(1-&gt;3)-beta-D-Gal-(1-&gt;3)-beta-D-Gal-(1-&gt;4)-beta-D-Xyl}-L-seryl-[protein] + UDP + H(+). It catalyses the reaction 3-O-(beta-D-GalNAc-(1-&gt;4)-beta-D-GlcA-(1-&gt;3)-beta-D-Gal-(1-&gt;3)-beta-D-Gal-(1-&gt;4)-beta-D-Xyl)-L-seryl-[protein] + UDP-alpha-D-glucuronate = 3-O-(beta-D-GlcA-(1-&gt;3)-beta-D-GalNAc-(1-&gt;4)-beta-D-GlcA-(1-&gt;3)-beta-D-Gal-(1-&gt;3)-beta-D-Gal-(1-&gt;4)-beta-D-Xyl)-L-seryl-[protein] + UDP + H(+). It carries out the reaction 3-O-{[beta-D-GalNAc-(1-&gt;4)-beta-D-GlcA-(1-&gt;3)](n)-beta-D-GalNAc-(1-&gt;4)-beta-D-GlcA-(1-&gt;3)-beta-D-Gal-(1-&gt;3)-beta-D-Gal-(1-&gt;4)-beta-D-Xyl}-L-seryl-[protein] + UDP-alpha-D-glucuronate = 3-O-{beta-D-GlcA-(1-&gt;3)-[beta-D-GalNAc-(1-&gt;4)-beta-D-GlcA-(1-&gt;3)](n)-beta-D-GalNAc-(1-&gt;4)-beta-D-GlcA-(1-&gt;3)-beta-D-Gal-(1-&gt;3)-beta-D-Gal-(1-&gt;4)-beta-D-Xyl}-L-seryl-[protein] + UDP + H(+). Glycosyltransferase that catalyzes elongation of chondroitin, a polysaccharide composed of a repeating disaccharide of N-acetylgalactosamine (GalNAc) and glucuronic acid (GlcUA) units, by alternatively transferring the GlcUA and GalNAc moiety from UDP-GlcUA and UDP-GalNAc to the non-reducing ends of the chondroitin chain. Each chondroitin unit has the composition beta-(1-&gt;4)-GlcUA-beta-(1-&gt;3)-GalNAc. This Pasteurella multocida (strain Pm70) protein is Chondroitin synthase (fcbD).